The sequence spans 749 residues: Polyribonucleotide nucleotidyltransferase (749 aa).

Mg(2+) contacts are provided by Asp487 and Asp493. The KH domain maps to Pro554–Ile613. The S1 motif domain maps to Gly623–Lys691. Residues Lys691–Asn749 are disordered. The span at Ser699–Lys713 shows a compositional bias: low complexity. The span at Asp714–Asp723 shows a compositional bias: basic and acidic residues.

The protein belongs to the polyribonucleotide nucleotidyltransferase family. It depends on Mg(2+) as a cofactor.

It localises to the cytoplasm. It carries out the reaction RNA(n+1) + phosphate = RNA(n) + a ribonucleoside 5'-diphosphate. Involved in mRNA degradation. Catalyzes the phosphorolysis of single-stranded polyribonucleotides processively in the 3'- to 5'-direction. This is Polyribonucleotide nucleotidyltransferase from Rickettsia conorii (strain ATCC VR-613 / Malish 7).